We begin with the raw amino-acid sequence, 200 residues long: Probable E3 ubiquitin-protein ligase ATL45 (200 aa).

Residues 26 to 46 form a helical membrane-spanning segment; the sequence is MVVILSALLCALVCVAGLAAV. The segment at 113–155 adopts an RING-type; atypical zinc-finger fold; the sequence is CAICITEFSEGEEIRILPLCSHAFHVACIDKWLTSRSSCPSCR.

Belongs to the RING-type zinc finger family. ATL subfamily. In terms of assembly, interacts with BIK1.

It is found in the membrane. It carries out the reaction S-ubiquitinyl-[E2 ubiquitin-conjugating enzyme]-L-cysteine + [acceptor protein]-L-lysine = [E2 ubiquitin-conjugating enzyme]-L-cysteine + N(6)-ubiquitinyl-[acceptor protein]-L-lysine.. The protein operates within protein modification; protein ubiquitination. Functionally, E3 ubiquitin-protein ligase that possess E3 ubiquitin ligase activity in vitro and mediates protein monoubiquitination. Triggers the monoubiquitination of phosphorylated BIK1 in response to pathogen-associated molecular pattern (PAMP) detection. May be involved in the early steps of the plant defense signaling pathway. The sequence is that of Probable E3 ubiquitin-protein ligase ATL45 from Arabidopsis thaliana (Mouse-ear cress).